The sequence spans 223 residues: Probable 3-beta-hydroxysteroid-Delta(8),Delta(7)-isomerase (223 aa).

Transmembrane regions (helical) follow at residues 28 to 48 (IVSI…LLFG), 58 to 78 (LMCW…YFVF), 115 to 135 (VEGI…YAIA), and 175 to 195 (FYYY…PSLI). An EXPERA domain is found at 54 to 196 (LDKLLMCWWT…WWVLIPSLIS (143 aa)).

It belongs to the EBP family.

The protein resides in the endoplasmic reticulum membrane. It catalyses the reaction lathosterol = 5alpha-cholest-8-en-3beta-ol. It functions in the pathway steroid biosynthesis; sterol biosynthesis. Its function is as follows. Catalyzes the conversion of Delta(8)-sterols to their corresponding Delta(7)-isomers. The polypeptide is Probable 3-beta-hydroxysteroid-Delta(8),Delta(7)-isomerase (Arabidopsis thaliana (Mouse-ear cress)).